Consider the following 190-residue polypeptide: Prostaglandin-H2 D-isomerase (190 aa).

Positions 1–22 (MATHHTLWMGLVLLGLLGGLQA) are cleaved as a signal peptide. Asn-51 carries an N-linked (GlcNAc...) asparagine glycan. Catalysis depends on Cys-65, which acts as the Nucleophile. A glycan (N-linked (GlcNAc...) asparagine) is linked at Asn-78. A disulfide bond links Cys-89 and Cys-186.

It belongs to the calycin superfamily. Lipocalin family. As to quaternary structure, monomer.

The protein resides in the rough endoplasmic reticulum. It is found in the nucleus membrane. Its subcellular location is the golgi apparatus. It localises to the cytoplasm. The protein localises to the perinuclear region. The protein resides in the secreted. It catalyses the reaction prostaglandin H2 = prostaglandin D2. Catalyzes the conversion of PGH2 to PGD2, a prostaglandin involved in smooth muscle contraction/relaxation and a potent inhibitor of platelet aggregation. Involved in a variety of CNS functions, such as sedation, NREM sleep and PGE2-induced allodynia, and may have an anti-apoptotic role in oligodendrocytes. Binds small non-substrate lipophilic molecules, including biliverdin, bilirubin, retinal, retinoic acid and thyroid hormone, and may act as a scavenger for harmful hydrophobic molecules and as a secretory retinoid and thyroid hormone transporter. Possibly involved in development and maintenance of the blood-brain, blood-retina, blood-aqueous humor and blood-testis barrier. It is likely to play important roles in both maturation and maintenance of the central nervous system and male reproductive system. Involved in PLA2G3-dependent maturation of mast cells. PLA2G3 is secreted by immature mast cells and acts on nearby fibroblasts upstream to PTDGS to synthesize PGD2, which in turn promotes mast cell maturation and degranulation via PTGDR. The sequence is that of Prostaglandin-H2 D-isomerase (PTGDS) from Macaca fuscata fuscata (Japanese macaque).